The chain runs to 423 residues: G protein-activated inward rectifier potassium channel 2 (423 aa).

Over 1 to 89 the chain is Cytoplasmic; it reads MAKLTESMTN…IFTTLVDLKW (89 aa). Phosphoserine is present on residues Ser-16 and Ser-23. A helical membrane pass occupies residues 90–114; that stretch reads RFNLLIFVMVYTVTWLFFGMIWWLI. The Extracellular segment spans residues 115-138; that stretch reads AYIRGDMDHIEDPSWTPCVTNLNG. Residues 139–150 constitute an intramembrane region (helical; Pore-forming); sequence FVSAFLFSIETE. Positions 151 to 157 form an intramembrane region, pore-forming; it reads TTIGYGY. The Selectivity filter signature appears at 152 to 157; it reads TIGYGY. The Extracellular segment spans residues 158-166; it reads RVITDKCPE. The chain crosses the membrane as a helical span at residues 167–188; sequence GIILLLIQSVLGSIVNAFMVGC. Residues 189–423 are Cytoplasmic-facing; sequence MFVKISQPKK…VANLENESKV (235 aa). Residues 390–423 are disordered; it reads NQHAELETEEEEKNLEEQTERNGDVANLENESKV. The short motif at 420–423 is the PDZ-binding element; that stretch reads ESKV.

This sequence belongs to the inward rectifier-type potassium channel (TC 1.A.2.1) family. KCNJ6 subfamily. In terms of assembly, associates with KCNJ3/GIRK1 or KCNJ5/GRIK4 to form a G-protein-activated heteromultimer pore-forming unit. The resulting inward current is much larger. Interacts (via PDZ-binding motif) with SNX27 (via PDZ domain); the interaction is required when endocytosed to prevent degradation in lysosomes and promote recycling to the plasma membrane. In terms of tissue distribution, most abundant in cerebellum, and to a lesser degree in islets and exocrine pancreas.

The protein localises to the membrane. It carries out the reaction K(+)(in) = K(+)(out). With respect to regulation, activated by phosphatidylinositol 4,5 biphosphate (PtdIns(4,5)P2). Functionally, inward rectifier potassium channels are characterized by a greater tendency to allow potassium to flow into the cell rather than out of it. Their voltage dependence is regulated by the concentration of extracellular potassium; as external potassium is raised, the voltage range of the channel opening shifts to more positive voltages. The inward rectification is mainly due to the blockage of outward current by internal magnesium. This potassium channel may be involved in the regulation of insulin secretion by glucose and/or neurotransmitters acting through G-protein-coupled receptors. This chain is G protein-activated inward rectifier potassium channel 2 (KCNJ6), found in Homo sapiens (Human).